A 247-amino-acid polypeptide reads, in one-letter code: Sec-independent protein translocase protein TatC (247 aa).

A run of 5 helical transmembrane segments spans residues 21–41, 71–91, 109–129, 154–174, and 195–215; these read IILL…KPLI, AFII…WAFV, ITFL…FPFI, FLLQ…VIML, and FCLL…HLMI.

The protein belongs to the TatC family. Forms a complex with TatA.

The protein localises to the cell membrane. Part of the twin-arginine translocation (Tat) system that transports large folded proteins containing a characteristic twin-arginine motif in their signal peptide across membranes. This Listeria innocua serovar 6a (strain ATCC BAA-680 / CLIP 11262) protein is Sec-independent protein translocase protein TatC.